The sequence spans 338 residues: Ketol-acid reductoisomerase (NADP(+)) (338 aa).

The 181-residue stretch at 1-181 (MQVYYDKDCD…GGGRTGIIET (181 aa)) folds into the KARI N-terminal Rossmann domain. NADP(+)-binding positions include 24–27 (FGSQ), Arg-47, Ser-50, Ser-52, and 82–85 (DEFQ). His-107 is an active-site residue. NADP(+) is bound at residue Gly-133. Residues 182–327 (TFRDECETDL…RKLRAMMPWI (146 aa)) form the KARI C-terminal knotted domain. The Mg(2+) site is built by Asp-190, Glu-194, Glu-226, and Glu-230. Ser-251 serves as a coordination point for substrate.

This sequence belongs to the ketol-acid reductoisomerase family. Requires Mg(2+) as cofactor.

It catalyses the reaction (2R)-2,3-dihydroxy-3-methylbutanoate + NADP(+) = (2S)-2-acetolactate + NADPH + H(+). The enzyme catalyses (2R,3R)-2,3-dihydroxy-3-methylpentanoate + NADP(+) = (S)-2-ethyl-2-hydroxy-3-oxobutanoate + NADPH + H(+). It functions in the pathway amino-acid biosynthesis; L-isoleucine biosynthesis; L-isoleucine from 2-oxobutanoate: step 2/4. Its pathway is amino-acid biosynthesis; L-valine biosynthesis; L-valine from pyruvate: step 2/4. Involved in the biosynthesis of branched-chain amino acids (BCAA). Catalyzes an alkyl-migration followed by a ketol-acid reduction of (S)-2-acetolactate (S2AL) to yield (R)-2,3-dihydroxy-isovalerate. In the isomerase reaction, S2AL is rearranged via a Mg-dependent methyl migration to produce 3-hydroxy-3-methyl-2-ketobutyrate (HMKB). In the reductase reaction, this 2-ketoacid undergoes a metal-dependent reduction by NADPH to yield (R)-2,3-dihydroxy-isovalerate. In Hydrogenovibrio crunogenus (strain DSM 25203 / XCL-2) (Thiomicrospira crunogena), this protein is Ketol-acid reductoisomerase (NADP(+)).